A 497-amino-acid polypeptide reads, in one-letter code: tRNA-2-methylthio-N(6)-dimethylallyladenosine synthase (497 aa).

Residues Met-1–Gln-10 are compositionally biased toward basic and acidic residues. The interval Met-1–Arg-26 is disordered. Positions Arg-26–Ile-142 constitute an MTTase N-terminal domain. Residues Cys-35, Cys-71, Cys-105, Cys-179, Cys-183, and Cys-186 each contribute to the [4Fe-4S] cluster site. The 231-residue stretch at Arg-165–Glu-395 folds into the Radical SAM core domain. The region spanning Gln-398–Leu-464 is the TRAM domain.

The protein belongs to the methylthiotransferase family. MiaB subfamily. Monomer. [4Fe-4S] cluster is required as a cofactor.

Its subcellular location is the cytoplasm. It catalyses the reaction N(6)-dimethylallyladenosine(37) in tRNA + (sulfur carrier)-SH + AH2 + 2 S-adenosyl-L-methionine = 2-methylsulfanyl-N(6)-dimethylallyladenosine(37) in tRNA + (sulfur carrier)-H + 5'-deoxyadenosine + L-methionine + A + S-adenosyl-L-homocysteine + 2 H(+). Its function is as follows. Catalyzes the methylthiolation of N6-(dimethylallyl)adenosine (i(6)A), leading to the formation of 2-methylthio-N6-(dimethylallyl)adenosine (ms(2)i(6)A) at position 37 in tRNAs that read codons beginning with uridine. The polypeptide is tRNA-2-methylthio-N(6)-dimethylallyladenosine synthase (Acidothermus cellulolyticus (strain ATCC 43068 / DSM 8971 / 11B)).